A 105-amino-acid polypeptide reads, in one-letter code: MMLKPSIDTLLDKVPSKYSLVILQAKRAHELEAGAAPTQSFKSVKSTLQALEEIESGNVVIHPDPAAKRAAIRARIEAERLAREEEERKIKEQIAKEKEEEGEKI.

Belongs to the RNA polymerase subunit omega family. In terms of assembly, the RNAP catalytic core consists of 2 alpha, 1 beta, 1 beta' and 1 omega subunit. When a sigma factor is associated with the core the holoenzyme is formed, which can initiate transcription.

It catalyses the reaction RNA(n) + a ribonucleoside 5'-triphosphate = RNA(n+1) + diphosphate. In terms of biological role, promotes RNA polymerase assembly. Latches the N- and C-terminal regions of the beta' subunit thereby facilitating its interaction with the beta and alpha subunits. The polypeptide is DNA-directed RNA polymerase subunit omega (Streptococcus equi subsp. equi (strain 4047)).